Reading from the N-terminus, the 252-residue chain is 5'-nucleotidase SurE (252 aa).

Positions 8, 9, 39, and 91 each coordinate a divalent metal cation.

This sequence belongs to the SurE nucleotidase family. A divalent metal cation is required as a cofactor.

It is found in the cytoplasm. It catalyses the reaction a ribonucleoside 5'-phosphate + H2O = a ribonucleoside + phosphate. Functionally, nucleotidase that shows phosphatase activity on nucleoside 5'-monophosphates. This Bordetella bronchiseptica (strain ATCC BAA-588 / NCTC 13252 / RB50) (Alcaligenes bronchisepticus) protein is 5'-nucleotidase SurE.